The chain runs to 329 residues: Cytoplasmic phosphatidylinositol transfer protein 1 (329 aa).

Positions 267-329 (SHGGYSSAPS…GNKPSLAKPE (63 aa)) are disordered.

This sequence belongs to the PtdIns transfer protein family. PI transfer class IIB subfamily.

It localises to the cytoplasm. The catalysed reaction is a 1,2-diacyl-sn-glycero-3-phospho-(1D-myo-inositol)(in) = a 1,2-diacyl-sn-glycero-3-phospho-(1D-myo-inositol)(out). It catalyses the reaction a 1,2-diacyl-sn-glycero-3-phosphate(in) = a 1,2-diacyl-sn-glycero-3-phosphate(out). Functionally, catalyzes the transfer of phosphatidylinositol (PI) and phosphatidic acid (PA) between membranes. Binds PA derived from the phospholipase D signaling pathway and among the cellular PA species, preferably binds to the C16:0/16:1 and C16:1/18:1 PA species. The sequence is that of Cytoplasmic phosphatidylinositol transfer protein 1 (pitpnc1) from Xenopus tropicalis (Western clawed frog).